The chain runs to 1200 residues: Ice nucleation protein (1200 aa).

The interval 176–1151 (ATYGSTLSGD…LSAGEDSILI (976 aa)) is octapeptide periodicity.

The protein belongs to the bacterial ice nucleation protein family.

The protein localises to the cell outer membrane. In terms of biological role, ice nucleation proteins enable bacteria to nucleate crystallization in supercooled water. The protein is Ice nucleation protein (inaZ) of Pseudomonas syringae pv. syringae.